Consider the following 311-residue polypeptide: tRNA dimethylallyltransferase (311 aa).

ATP is bound at residue 8–15 (GPTGVGKS). 10-15 (TGVGKS) is a binding site for substrate.

Belongs to the IPP transferase family. Monomer. It depends on Mg(2+) as a cofactor.

It catalyses the reaction adenosine(37) in tRNA + dimethylallyl diphosphate = N(6)-dimethylallyladenosine(37) in tRNA + diphosphate. Functionally, catalyzes the transfer of a dimethylallyl group onto the adenine at position 37 in tRNAs that read codons beginning with uridine, leading to the formation of N6-(dimethylallyl)adenosine (i(6)A). The polypeptide is tRNA dimethylallyltransferase (Mycobacterium leprae (strain Br4923)).